A 381-amino-acid polypeptide reads, in one-letter code: Deoxyguanosinetriphosphate triphosphohydrolase-like protein (381 aa).

An HD domain is found at 76–203 (RMTHTLEVAG…ADLSDEIAYT (128 aa)).

It belongs to the dGTPase family. Type 2 subfamily.

This Leptospira interrogans serogroup Icterohaemorrhagiae serovar copenhageni (strain Fiocruz L1-130) protein is Deoxyguanosinetriphosphate triphosphohydrolase-like protein.